The chain runs to 83 residues: Exodeoxyribonuclease 7 small subunit (83 aa).

It belongs to the XseB family. As to quaternary structure, heterooligomer composed of large and small subunits.

The protein localises to the cytoplasm. The catalysed reaction is Exonucleolytic cleavage in either 5'- to 3'- or 3'- to 5'-direction to yield nucleoside 5'-phosphates.. Functionally, bidirectionally degrades single-stranded DNA into large acid-insoluble oligonucleotides, which are then degraded further into small acid-soluble oligonucleotides. The protein is Exodeoxyribonuclease 7 small subunit of Heliobacterium modesticaldum (strain ATCC 51547 / Ice1).